A 196-amino-acid chain; its full sequence is RNA pyrophosphohydrolase (196 aa).

In terms of domain architecture, Nudix hydrolase spans 6–149 (GYRPNVGIVI…KRDVYRKVMK (144 aa)). The Nudix box signature appears at 38–59 (GGINDNESAEQAMYRELHEEVG).

The protein belongs to the Nudix hydrolase family. RppH subfamily. Requires a divalent metal cation as cofactor.

In terms of biological role, accelerates the degradation of transcripts by removing pyrophosphate from the 5'-end of triphosphorylated RNA, leading to a more labile monophosphorylated state that can stimulate subsequent ribonuclease cleavage. The chain is RNA pyrophosphohydrolase from Haemophilus influenzae (strain PittEE).